Here is a 408-residue protein sequence, read N- to C-terminus: Peptidase T (408 aa).

His-78 is a Zn(2+) binding site. Asp-80 is an active-site residue. A Zn(2+)-binding site is contributed by Asp-141. Catalysis depends on Glu-175, which acts as the Proton acceptor. Residues Glu-176, Asp-198, and His-380 each coordinate Zn(2+).

This sequence belongs to the peptidase M20B family. The cofactor is Zn(2+).

The protein localises to the cytoplasm. The enzyme catalyses Release of the N-terminal residue from a tripeptide.. Functionally, cleaves the N-terminal amino acid of tripeptides. This is Peptidase T from Halothermothrix orenii (strain H 168 / OCM 544 / DSM 9562).